The sequence spans 144 residues: Large ribosomal subunit protein uL22 (144 aa).

The interval 123 to 144 is disordered; sequence ELVKKRTMGHKKEKAKQKQKQQ. The segment covering 125 to 144 has biased composition (basic residues); sequence VKKRTMGHKKEKAKQKQKQQ.

This sequence belongs to the universal ribosomal protein uL22 family. Part of the 50S ribosomal subunit.

Functionally, this protein binds specifically to 23S rRNA; its binding is stimulated by other ribosomal proteins, e.g. L4, L17, and L20. It is important during the early stages of 50S assembly. It makes multiple contacts with different domains of the 23S rRNA in the assembled 50S subunit and ribosome. In terms of biological role, the globular domain of the protein is located near the polypeptide exit tunnel on the outside of the subunit, while an extended beta-hairpin is found that lines the wall of the exit tunnel in the center of the 70S ribosome. In Mycoplasma genitalium (strain ATCC 33530 / DSM 19775 / NCTC 10195 / G37) (Mycoplasmoides genitalium), this protein is Large ribosomal subunit protein uL22.